A 266-amino-acid chain; its full sequence is Flavin-dependent thymidylate synthase (266 aa).

The 212-residue stretch at 11 to 222 folds into the ThyX domain; that stretch reads GFIRLVDYMG…PLACASFERH (212 aa). FAD contacts are provided by residues Ser-57, 80–82, and Glu-88; that span reads RHR. DUMP is bound by residues 77 to 80, 88 to 92, and Arg-161; these read QWIR and EISGR. The ThyX motif signature appears at 80 to 90; that stretch reads RHRTARLNEIS. Residues 177–179 and His-183 contribute to the FAD site; that span reads DLH. A dUMP-binding site is contributed by Arg-188. Arg-188 (involved in ionization of N3 of dUMP, leading to its activation) is an active-site residue.

Belongs to the thymidylate synthase ThyX family. Homotetramer. FAD is required as a cofactor.

The enzyme catalyses dUMP + (6R)-5,10-methylene-5,6,7,8-tetrahydrofolate + NADPH + H(+) = dTMP + (6S)-5,6,7,8-tetrahydrofolate + NADP(+). It participates in pyrimidine metabolism; dTTP biosynthesis. Catalyzes the reductive methylation of 2'-deoxyuridine-5'-monophosphate (dUMP) to 2'-deoxythymidine-5'-monophosphate (dTMP) while utilizing 5,10-methylenetetrahydrofolate (mTHF) as the methyl donor, and NADPH and FADH(2) as the reductant. In Treponema denticola (strain ATCC 35405 / DSM 14222 / CIP 103919 / JCM 8153 / KCTC 15104), this protein is Flavin-dependent thymidylate synthase.